The following is a 349-amino-acid chain: Transcription elongation factor A protein 3 (349 aa).

The 78-residue stretch at 5–82 (EELLRIAKKL…RNWKQLLDSP (78 aa)) folds into the TFIIS N-terminal domain. The segment at 80–170 (DSPATPKGEK…RTPSSPSSPT (91 aa)) is disordered. Over residues 101–110 (KGLDCSDWKP) the composition is skewed to basic and acidic residues. Position 115 is a phosphoserine (serine 115). A compositionally biased stretch (basic and acidic residues) spans 121–133 (RVEEPKDRRDSVD). Low complexity-rich tracts occupy residues 134–144 (SKSSATSSPKR) and 160–170 (PRTPSSPSSPT). Serine 141 bears the Phosphoserine mark. Positions 188 to 304 (VRDKCVEMLS…EHQMAKTGGT (117 aa)) constitute a TFIIS central domain. The TFIIS-type zinc finger occupies 307-347 (DLFQCSKCKKKNCTYNQVQTRSADEPMTTFVLCNECGNRWK). Cysteine 311, cysteine 314, cysteine 339, and cysteine 342 together coordinate Zn(2+).

This sequence belongs to the TFS-II family.

The protein localises to the nucleus. Its function is as follows. Necessary for efficient RNA polymerase II transcription elongation past template-encoded arresting sites. The arresting sites in DNA have the property of trapping a certain fraction of elongating RNA polymerases that pass through, resulting in locked ternary complexes. Cleavage of the nascent transcript by S-II allows the resumption of elongation from the new 3'-terminus. This is Transcription elongation factor A protein 3 (TCEA3) from Bos taurus (Bovine).